A 447-amino-acid chain; its full sequence is MTTILKHLPAGQRIGIAFSGGLDTSAALLWMRQKGAVPYAYTANLGQPDEDDYDAIPRRAMEYGAENARLIDCRKQLVAEGIAAIQCGAFHNTTGGLTYFNTTPLGRAVTGTMLVAAMKEDGVNIWGDGSTYKGNDIERFYRYGLLTNAELQIYKPWLDTDFIDELGGRHEMSEFMIACGFDYKMSVEKAYSTDSNMLGATHEAKDLEFLNSSVKIVNPIMGVKFWDESVKIPAEVVTVRFEQGHPVALNGKTFSDDVEMMLEANRIGGRHGLGMSDQIENRIIEAKSRGIYEAPGMALLHIAYERLLTGIHNEDTIEQYHSHGRQLGKLLYQGRWFDSQALMLRDGLQRWVASQITGEVTLELRRGNDYSILNTVSDNLTYKAERLTMEKGESVFSPDDRIGQLTMRNLDITDTREKLFGYAKAGLLTASSATGLPQVENLENKGK.

ATP is bound by residues 17 to 25 (AFSGGLDTS) and Ala-43. Tyr-99 is a binding site for L-citrulline. Gly-129 and Thr-131 together coordinate ATP. Thr-131, Asn-135, and Asp-136 together coordinate L-aspartate. An L-citrulline-binding site is contributed by Asn-135. Asp-136 serves as a coordination point for ATP. Residues Arg-139 and Ser-192 each coordinate L-citrulline. Asp-194 is a binding site for ATP. L-citrulline-binding residues include Thr-201, Glu-203, and Glu-280.

The protein belongs to the argininosuccinate synthase family. Type 2 subfamily. As to quaternary structure, homotetramer.

It localises to the cytoplasm. The catalysed reaction is L-citrulline + L-aspartate + ATP = 2-(N(omega)-L-arginino)succinate + AMP + diphosphate + H(+). It participates in amino-acid biosynthesis; L-arginine biosynthesis; L-arginine from L-ornithine and carbamoyl phosphate: step 2/3. This is Argininosuccinate synthase from Salmonella schwarzengrund (strain CVM19633).